The following is a 361-amino-acid chain: Mitogen-activated protein kinase 14A (361 aa).

One can recognise a Protein kinase domain in the interval 25-309 (YQNLSPVGSG…AAEALAHPYF (285 aa)). ATP is bound by residues 31–39 (VGSGAYGSV) and Lys-54. Residue Asp-169 is the Proton acceptor of the active site. Thr-181 bears the Phosphothreonine; by MAP2K3 mark. Residues 181–183 (TGY) carry the TXY motif. At Tyr-183 the chain carries Phosphotyrosine; by MAP2K3.

This sequence belongs to the protein kinase superfamily. CMGC Ser/Thr protein kinase family. MAP kinase subfamily. Mg(2+) serves as cofactor. Dually phosphorylated on Thr-181 and Tyr-183, which activates the enzyme.

Its subcellular location is the cytoplasm. It localises to the nucleus. The enzyme catalyses L-seryl-[protein] + ATP = O-phospho-L-seryl-[protein] + ADP + H(+). The catalysed reaction is L-threonyl-[protein] + ATP = O-phospho-L-threonyl-[protein] + ADP + H(+). Activated by threonine and tyrosine phosphorylation by the dual specificity kinase, MKK3. In terms of biological role, serine/threonine kinase which acts as an essential component of the MAP kinase signal transduction pathway. Mapk14a is one of the four p38 MAPKs which play an important role in the cascades of cellular responses evoked by extracellular stimuli such as pro-inflammatory cytokines or physical stress leading to direct activation of transcription factors. Accordingly, p38 MAPKs phosphorylate a broad range of proteins and it has been estimated that they may have approximately 200 to 300 substrates each. Some of the targets are downstream kinases which are activated through phosphorylation and further phosphorylate additional targets. Required for cytokinesis on the future dorsal side of the blastodisc, suggesting a role in symmetrical and synchronous blastomere cleavage. The chain is Mitogen-activated protein kinase 14A (mapk14a) from Danio rerio (Zebrafish).